A 153-amino-acid polypeptide reads, in one-letter code: 6,7-dimethyl-8-ribityllumazine synthase (153 aa).

5-amino-6-(D-ribitylamino)uracil is bound by residues Phe-22, 56-58 (AFE), and 80-82 (CVI). Residue 85–86 (AT) coordinates (2S)-2-hydroxy-3-oxobutyl phosphate. His-88 functions as the Proton donor in the catalytic mechanism. A 5-amino-6-(D-ribitylamino)uracil-binding site is contributed by Phe-113. A (2S)-2-hydroxy-3-oxobutyl phosphate-binding site is contributed by Arg-127.

Belongs to the DMRL synthase family.

The catalysed reaction is (2S)-2-hydroxy-3-oxobutyl phosphate + 5-amino-6-(D-ribitylamino)uracil = 6,7-dimethyl-8-(1-D-ribityl)lumazine + phosphate + 2 H2O + H(+). It functions in the pathway cofactor biosynthesis; riboflavin biosynthesis; riboflavin from 2-hydroxy-3-oxobutyl phosphate and 5-amino-6-(D-ribitylamino)uracil: step 1/2. In terms of biological role, catalyzes the formation of 6,7-dimethyl-8-ribityllumazine by condensation of 5-amino-6-(D-ribitylamino)uracil with 3,4-dihydroxy-2-butanone 4-phosphate. This is the penultimate step in the biosynthesis of riboflavin. In Endomicrobium trichonymphae, this protein is 6,7-dimethyl-8-ribityllumazine synthase.